The sequence spans 127 residues: Glycine cleavage system H protein (127 aa).

Residues 22 to 104 (QVVIGITHFA…YEGAWMVKVE (83 aa)) enclose the Lipoyl-binding domain. Lys-63 carries the post-translational modification N6-lipoyllysine.

It belongs to the GcvH family. As to quaternary structure, the glycine cleavage system is composed of four proteins: P, T, L and H. (R)-lipoate is required as a cofactor.

The glycine cleavage system catalyzes the degradation of glycine. The H protein shuttles the methylamine group of glycine from the P protein to the T protein. Functionally, is also involved in protein lipoylation via its role as an octanoyl/lipoyl carrier protein intermediate. This chain is Glycine cleavage system H protein, found in Bacillus cytotoxicus (strain DSM 22905 / CIP 110041 / 391-98 / NVH 391-98).